Reading from the N-terminus, the 360-residue chain is MLSTSRSRFIRNTNGSGEEVTTFFDYDYGAPCHKFDVKQIGAQLLPPLYSLVFIFGFVGNMLVVLILINCKKLKSLTDIYLLNLAISDLLFLITLPLWAHSAANEWVFGNAMCKLFTGLYHIGYLGGIFFIILLTIDRYLAIVHAVFALKARTVTFGVVTSVITWLVAVFASVPGIIFTKCQEEDSVYICGPYFPRGWNNFHTIMRNILGLVLPLLIMVICYSGILKTLLRCRNEKKRHRAVRLIFTIMIVYFLFWTPYNIVILLNTFQEFFGLSNCESTRQLDQATQVTETLGMTHCCINPIIYAFVGEKFRRYLSMFFRKYITKRFCKQCPVFYRETVDGVTSTNTPSTAEQEVSVGL.

Topologically, residues 1–42 (MLSTSRSRFIRNTNGSGEEVTTFFDYDYGAPCHKFDVKQIGA) are extracellular. An N-linked (GlcNAc...) asparagine glycan is attached at Asn14. At Tyr26 the chain carries Sulfotyrosine. Residues 43–70 (QLLPPLYSLVFIFGFVGNMLVVLILINC) traverse the membrane as a helical segment. The Cytoplasmic segment spans residues 71–80 (KKLKSLTDIY). Residues 81–100 (LLNLAISDLLFLITLPLWAH) traverse the membrane as a helical segment. Residues 101 to 114 (SAANEWVFGNAMCK) are Extracellular-facing. Cys113 and Cys190 are disulfide-bonded. The helical transmembrane segment at 115 to 136 (LFTGLYHIGYLGGIFFIILLTI) threads the bilayer. The Cytoplasmic portion of the chain corresponds to 137–153 (DRYLAIVHAVFALKART). Phosphotyrosine; by JAK2 is present on Tyr139. The helical transmembrane segment at 154 to 178 (VTFGVVTSVITWLVAVFASVPGIIF) threads the bilayer. The Extracellular portion of the chain corresponds to 179 to 206 (TKCQEEDSVYICGPYFPRGWNNFHTIMR). The chain crosses the membrane as a helical span at residues 207-226 (NILGLVLPLLIMVICYSGIL). The Cytoplasmic segment spans residues 227 to 243 (KTLLRCRNEKKRHRAVR). A helical transmembrane segment spans residues 244–268 (LIFTIMIVYFLFWTPYNIVILLNTF). Topologically, residues 269 to 285 (QEFFGLSNCESTRQLDQ) are extracellular. The chain crosses the membrane as a helical span at residues 286 to 309 (ATQVTETLGMTHCCINPIIYAFVG). Topologically, residues 310–360 (EKFRRYLSMFFRKYITKRFCKQCPVFYRETVDGVTSTNTPSTAEQEVSVGL) are cytoplasmic.

The protein belongs to the G-protein coupled receptor 1 family. In terms of assembly, interacts with ARRB1. Interacts (via extracellular N-terminal region) with beta-defensin DEFB106A/DEFB106B; this interaction may preferentially require specific tyrosine sulfation on CCR2. Interacts with NUP85; the interaction is required for CCR2 clusters formation on the cell membrane and CCR2 signaling. In terms of processing, N-glycosylated. Sulfation increases the affinity for both monomeric and dimeric CCL2 with stronger binding to the monomeric form. Binding of sulfated CCR2 to CCL2 promotes conversion of CCL2 from dimer to monomer.

The protein localises to the cell membrane. Its function is as follows. Key functional receptor for CCL2 but can also bind CCL7 and CCL12. Its binding with CCL2 on monocytes and macrophages mediates chemotaxis and migration induction through the activation of the PI3K cascade, the small G protein Rac and lamellipodium protrusion. Also acts as a receptor for the beta-defensin DEFB106A/DEFB106B. Regulates the expression of T-cell inflammatory cytokines and T-cell differentiation, promoting the differentiation of T-cells into T-helper 17 cells (Th17) during inflammation. Facilitates the export of mature thymocytes by enhancing directional movement of thymocytes to sphingosine-1-phosphate stimulation and up-regulation of S1P1R expression; signals through the JAK-STAT pathway to regulate FOXO1 activity leading to an increased expression of S1P1R. Plays an important role in mediating peripheral nerve injury-induced neuropathic pain. Increases NMDA-mediated synaptic transmission in both dopamine D1 and D2 receptor-containing neurons, which may be caused by MAPK/ERK-dependent phosphorylation of GRIN2B/NMDAR2B. Mediates the recruitment of macrophages and monocytes to the injury site following brain injury. The protein is C-C chemokine receptor type 2 (CCR2) of Macaca mulatta (Rhesus macaque).